The following is a 456-amino-acid chain: Bifunctional protein GlmU (456 aa).

The pyrophosphorylase stretch occupies residues 1-229; that stretch reads MTKKALSAVI…VMEVEGANNR (229 aa). UDP-N-acetyl-alpha-D-glucosamine is bound by residues 11 to 14, lysine 25, glutamine 76, 81 to 82, 103 to 105, glycine 140, glutamate 154, asparagine 169, and asparagine 227; these read LAAG, GT, and YGD. Aspartate 105 lines the Mg(2+) pocket. Asparagine 227 is a Mg(2+) binding site. The tract at residues 230-250 is linker; sequence LQLAALERYLQNKQASKLLLE. Positions 251–456 are N-acetyltransferase; sequence GVMIYDPARF…QGWQRPIKKK (206 aa). UDP-N-acetyl-alpha-D-glucosamine contacts are provided by arginine 333 and lysine 351. Residue histidine 363 is the Proton acceptor of the active site. UDP-N-acetyl-alpha-D-glucosamine is bound by residues tyrosine 366 and asparagine 377. Acetyl-CoA-binding positions include alanine 380, 386–387, serine 405, alanine 423, and arginine 440; that span reads NY.

It in the N-terminal section; belongs to the N-acetylglucosamine-1-phosphate uridyltransferase family. This sequence in the C-terminal section; belongs to the transferase hexapeptide repeat family. Homotrimer. The cofactor is Mg(2+).

The protein resides in the cytoplasm. The catalysed reaction is alpha-D-glucosamine 1-phosphate + acetyl-CoA = N-acetyl-alpha-D-glucosamine 1-phosphate + CoA + H(+). The enzyme catalyses N-acetyl-alpha-D-glucosamine 1-phosphate + UTP + H(+) = UDP-N-acetyl-alpha-D-glucosamine + diphosphate. It functions in the pathway nucleotide-sugar biosynthesis; UDP-N-acetyl-alpha-D-glucosamine biosynthesis; N-acetyl-alpha-D-glucosamine 1-phosphate from alpha-D-glucosamine 6-phosphate (route II): step 2/2. Its pathway is nucleotide-sugar biosynthesis; UDP-N-acetyl-alpha-D-glucosamine biosynthesis; UDP-N-acetyl-alpha-D-glucosamine from N-acetyl-alpha-D-glucosamine 1-phosphate: step 1/1. The protein operates within bacterial outer membrane biogenesis; LPS lipid A biosynthesis. In terms of biological role, catalyzes the last two sequential reactions in the de novo biosynthetic pathway for UDP-N-acetylglucosamine (UDP-GlcNAc). The C-terminal domain catalyzes the transfer of acetyl group from acetyl coenzyme A to glucosamine-1-phosphate (GlcN-1-P) to produce N-acetylglucosamine-1-phosphate (GlcNAc-1-P), which is converted into UDP-GlcNAc by the transfer of uridine 5-monophosphate (from uridine 5-triphosphate), a reaction catalyzed by the N-terminal domain. This chain is Bifunctional protein GlmU, found in Haemophilus influenzae (strain PittEE).